A 237-amino-acid polypeptide reads, in one-letter code: Phosphoribosylaminoimidazole-succinocarboxamide synthase (237 aa).

It belongs to the SAICAR synthetase family.

The catalysed reaction is 5-amino-1-(5-phospho-D-ribosyl)imidazole-4-carboxylate + L-aspartate + ATP = (2S)-2-[5-amino-1-(5-phospho-beta-D-ribosyl)imidazole-4-carboxamido]succinate + ADP + phosphate + 2 H(+). It participates in purine metabolism; IMP biosynthesis via de novo pathway; 5-amino-1-(5-phospho-D-ribosyl)imidazole-4-carboxamide from 5-amino-1-(5-phospho-D-ribosyl)imidazole-4-carboxylate: step 1/2. This chain is Phosphoribosylaminoimidazole-succinocarboxamide synthase, found in Erwinia tasmaniensis (strain DSM 17950 / CFBP 7177 / CIP 109463 / NCPPB 4357 / Et1/99).